Consider the following 424-residue polypeptide: MADPLADFGSNVDLTVQEILLAASQHDVPKLRRLIRSNDKDGNPANVKDPETGFSPLHAAIAACEPDEAQTETNGVNGETSSASTEQKSLVQSAAETVKYLLQEGAIWNDLDLNDETPGCIARRLGLTELYEMIVDAGVRAELLLNRLDGYEPLSDDEDDQETGQGEDAANEPAAEEDQDGAPELVETTAADASAAEASTEGPGPDVTSSRYLDSNLTFTNDRLLDQDQNGVMMAWETEIMSRSAKKLLPTTGLRVMNIGHGMGIVDGFIQEQSPAAHHIVEAHPDVVAEMKRKGWHEKPGVVIHEGRWQDILPALVAQGETFDAIYYDTFAESYADFREFFSEQVIGLLEQDGKWGFFNGMGADRQISYDVYQKVVEMDLFEAGFDVEWEEIKVPKLEGEWTGVRRPYWVVDNYRLPLCKFMD.

Disordered regions lie at residues 67-89 (DEAQ…EQKS) and 151-212 (YEPL…SSRY). Residues 71-89 (TETNGVNGETSSASTEQKS) are compositionally biased toward polar residues. 2 stretches are compositionally biased toward low complexity: residues 163–173 (TGQGEDAANEP) and 187–201 (ETTA…ASTE). The region spanning 205–424 (PDVTSSRYLD…YRLPLCKFMD (220 aa)) is the RMT2 domain. S-adenosyl-L-methionine is bound by residues Tyr212, Met241, 261–266 (HGMGIV), 282–284 (EAH), 309–310 (WQ), and Asp329.

The protein belongs to the class I-like SAM-binding methyltransferase superfamily. RMT2 methyltransferase family. In terms of assembly, monomer.

The protein localises to the cytoplasm. It localises to the nucleus. In terms of biological role, S-adenosyl-L-methionine-dependent protein-arginine N-methyltransferase that methylates the delta-nitrogen atom of arginine residues to form N5-methylarginine (type IV) in target proteins. Monomethylates ribosomal protein L12. In Aspergillus fumigatus (strain ATCC MYA-4609 / CBS 101355 / FGSC A1100 / Af293) (Neosartorya fumigata), this protein is Protein arginine N-methyltransferase 2.